We begin with the raw amino-acid sequence, 210 residues long: RNA chaperone ProQ (210 aa).

Positions 98–127 are enriched in basic and acidic residues; the sequence is HAKASLEESKAKVAARRKEQAKKAREEAKA. Residues 98–155 form a disordered region; the sequence is HAKASLEESKAKVAARRKEQAKKAREEAKAKKPARATTPPKRRPQPAAVAKKQEKPVE.

This sequence belongs to the ProQ family.

The protein resides in the cytoplasm. RNA chaperone with significant RNA binding, RNA strand exchange and RNA duplexing activities. The chain is RNA chaperone ProQ from Aliivibrio salmonicida (strain LFI1238) (Vibrio salmonicida (strain LFI1238)).